A 232-amino-acid chain; its full sequence is Leucyl/phenylalanyl-tRNA--protein transferase (232 aa).

This sequence belongs to the L/F-transferase family.

It localises to the cytoplasm. It carries out the reaction N-terminal L-lysyl-[protein] + L-leucyl-tRNA(Leu) = N-terminal L-leucyl-L-lysyl-[protein] + tRNA(Leu) + H(+). It catalyses the reaction N-terminal L-arginyl-[protein] + L-leucyl-tRNA(Leu) = N-terminal L-leucyl-L-arginyl-[protein] + tRNA(Leu) + H(+). The catalysed reaction is L-phenylalanyl-tRNA(Phe) + an N-terminal L-alpha-aminoacyl-[protein] = an N-terminal L-phenylalanyl-L-alpha-aminoacyl-[protein] + tRNA(Phe). Functionally, functions in the N-end rule pathway of protein degradation where it conjugates Leu, Phe and, less efficiently, Met from aminoacyl-tRNAs to the N-termini of proteins containing an N-terminal arginine or lysine. In Nitrosospira multiformis (strain ATCC 25196 / NCIMB 11849 / C 71), this protein is Leucyl/phenylalanyl-tRNA--protein transferase.